Here is a 572-residue protein sequence, read N- to C-terminus: Urease subunit alpha (572 aa).

The Urease domain maps to 136–572; that stretch reads GGIDTHIHFI…VPLGQRYFLF (437 aa). Residues H141, H143, and K224 each coordinate Ni(2+). K224 carries the post-translational modification N6-carboxylysine. H226 serves as a coordination point for substrate. The Ni(2+) site is built by H253 and H279. The active-site Proton donor is the H327. D367 provides a ligand contact to Ni(2+).

The protein belongs to the metallo-dependent hydrolases superfamily. Urease alpha subunit family. In terms of assembly, heterotrimer of UreA (gamma), UreB (beta) and UreC (alpha) subunits. Three heterotrimers associate to form the active enzyme. Requires Ni cation as cofactor. Post-translationally, carboxylation allows a single lysine to coordinate two nickel ions.

It localises to the cytoplasm. The enzyme catalyses urea + 2 H2O + H(+) = hydrogencarbonate + 2 NH4(+). The protein operates within nitrogen metabolism; urea degradation; CO(2) and NH(3) from urea (urease route): step 1/1. The chain is Urease subunit alpha from Haemophilus influenzae (strain PittGG).